A 101-amino-acid chain; its full sequence is Secreted enzymes activator (101 aa).

Over residues 1-10 (MSRRRRRASA) the composition is skewed to basic residues. 2 disordered regions span residues 1–26 (MSRR…PYGS) and 45–101 (TRLA…NGRG). A compositionally biased stretch (low complexity) spans 45–60 (TRLAASSRASRAAVGS). The H-T-H motif DNA-binding region spans 55–74 (RAAVGSFDGAKNRPASSRRQ).

Its function is as follows. Increases the production of several extracellular enzymes, like alkaline phosphatase, amylase, protease or lipase. When present in high concentrations, delays the production of pigments and sporulation. This chain is Secreted enzymes activator (saf), found in Streptomyces griseus.